Consider the following 203-residue polypeptide: Large ribosomal subunit protein bL25 (203 aa).

It belongs to the bacterial ribosomal protein bL25 family. CTC subfamily. As to quaternary structure, part of the 50S ribosomal subunit; part of the 5S rRNA/L5/L18/L25 subcomplex. Contacts the 5S rRNA. Binds to the 5S rRNA independently of L5 and L18.

In terms of biological role, this is one of the proteins that binds to the 5S RNA in the ribosome where it forms part of the central protuberance. This Rickettsia typhi (strain ATCC VR-144 / Wilmington) protein is Large ribosomal subunit protein bL25.